The chain runs to 1045 residues: FERM, ARHGEF and pleckstrin domain-containing protein 1 (1045 aa).

Residues 1-37 are disordered; it reads MGEIEQRPTPGSRLGAPENSGISTLERGQKPPPTPSG. A phosphoserine mark is found at Ser-20 and Ser-23. Residue Thr-24 is modified to Phosphothreonine. The FERM domain occupies 40 to 320; sequence VSIKIQMLDD…EHHAFFRLFE (281 aa). Residues Ser-340, Ser-373, Ser-389, Ser-403, Ser-418, Ser-427, and Ser-433 each carry the phosphoserine modification. The tract at residues 392 to 534 is disordered; it reads SASLTFGEGA…TDDEDEGRRK (143 aa). Polar residues-rich tracts occupy residues 471–489 and 496–511; these read TGSL…NSQG and VTLS…QASP. Residues Ser-510 and Ser-514 each carry the phosphoserine modification. A DH domain is found at 540-730; it reads KAYFIAKEVS…TEMVAQLHGT (191 aa). The region spanning 759 to 856 is the PH 1 domain; that stretch reads EFIRLGSLSK…WVEDIQMAID (98 aa). Phosphoserine is present on residues Ser-833, Ser-872, and Ser-878. Positions 866 to 902 are disordered; that stretch reads PEFLASSPPDNKSPDEATAADQESEDDLSASRTSLER. Position 883 is a phosphothreonine (Thr-883). Phosphoserine is present on residues Ser-889, Ser-896, and Ser-899. The PH 2 domain maps to 932 to 1029; the sequence is ENQLSGNLLR…WMEVIRSATS (98 aa).

In terms of assembly, interacts with CADM1. Interacts with RAC1.

Its subcellular location is the cell membrane. It is found in the synapse. It localises to the synaptosome. The protein resides in the cytoplasm. The protein localises to the cytosol. Its subcellular location is the cell projection. It is found in the filopodium. It localises to the dendrite. The protein resides in the dendritic spine. Its function is as follows. Functions as a guanine nucleotide exchange factor for RAC1. May play a role in semaphorin signaling. Plays a role in the assembly and disassembly of dendritic filopodia, the formation of dendritic spines, regulation of dendrite length and ultimately the formation of synapses. The polypeptide is FERM, ARHGEF and pleckstrin domain-containing protein 1 (FARP1) (Pongo abelii (Sumatran orangutan)).